A 472-amino-acid chain; its full sequence is Calcitonin gene-related peptide type 1 receptor (472 aa).

Residues 1 to 28 form the signal peptide; sequence MGLLLRSALFKYIIIVLIMLNLRGYVLA. Residues 29 to 149 are Extracellular-facing; the sequence is EQEQGSQIPL…FTHEKVKTAL (121 aa). Cystine bridges form between C58–C84, C75–C115, and C98–C137. Residues N76, N128, and N133 are each glycosylated (N-linked (GlcNAc...) asparagine). A helical membrane pass occupies residues 150–174; the sequence is NLYYLTIIGHGLSIASLLISLGIFF. Residues 175 to 185 are Cytoplasmic-facing; sequence YFKNLSCQRIT. Residues 186–208 form a helical membrane-spanning segment; the sequence is LHKNLFFSFVCNSIITIISLSAV. Topologically, residues 209 to 219 are extracellular; sequence ANNQALVATNP. A helical membrane pass occupies residues 220–248; that stretch reads VSCKISQFIHLYLMGCNYFWMLCEGIYLH. The Cytoplasmic segment spans residues 249-262; it reads TLIVVAVFAEKQHL. A helical transmembrane segment spans residues 263–283; it reads MWYYLLGWGFPLIPACIHAVA. Residues 284-299 lie on the Extracellular side of the membrane; sequence RSLYYNDNCWISSETH. A helical membrane pass occupies residues 300-324; it reads LLYIIHGPICAALLVNLFFLLNIVR. Topologically, residues 325–339 are cytoplasmic; it reads VLITKLKVTHQAESN. Residues 340–361 form a helical membrane-spanning segment; that stretch reads LYMKAVRATLILVPLLGIEFVL. At 362–376 the chain is on the extracellular side; sequence FPWKPEGRIAEEIYD. The chain crosses the membrane as a helical span at residues 377–397; it reads YVMHILMHYQGLLVATIFCFF. The Cytoplasmic portion of the chain corresponds to 398-472; the sequence is NGEVQAVLKR…VFFKTEKQYM (75 aa).

This sequence belongs to the G-protein coupled receptor 2 family.

It is found in the cell membrane. Its function is as follows. May function as G protein-coupled receptor for calcitonin-gene-related peptides and adrenomedullin. Specificity may be modulated by accessory proteins. May activate cAMP-dependent pathway. This Xenopus tropicalis (Western clawed frog) protein is Calcitonin gene-related peptide type 1 receptor (calcrl).